A 345-amino-acid polypeptide reads, in one-letter code: MRVAPMTSRFLDACRRRPTDVRPVWFMRQAGRYMKQYRQIREKHGILEICKRPDLAATVTLQPIEVLDVDAAIIFADLLLPIEPMGLKLKYEKGEGPVIGNPVRTSDDVDSLSTTNTDELGYVGEAIQHVVRALAGKVPVVGFVGAPFTMASYMIEGGASRNFVRTKKLMYSDETLWRRLMGKIVDVLAPFAHSQVAAGARAIQVFDSWVGALGSDDYVRFAAPYSRALIERIRSTGVPVIHFGTGASGFFRELHAAGGDVMGVDWRINIDQAWMDISYRSAIQGNLDPVALFAPLPELRTKVQELLKRTGTRPGHIFNLGHGILPETPVENVKAVVELVREFRP.

Residues 28–32 (RQAGR), aspartate 77, tyrosine 153, serine 208, and histidine 322 contribute to the substrate site.

This sequence belongs to the uroporphyrinogen decarboxylase family. Homodimer.

Its subcellular location is the cytoplasm. The enzyme catalyses uroporphyrinogen III + 4 H(+) = coproporphyrinogen III + 4 CO2. It participates in porphyrin-containing compound metabolism; protoporphyrin-IX biosynthesis; coproporphyrinogen-III from 5-aminolevulinate: step 4/4. In terms of biological role, catalyzes the decarboxylation of four acetate groups of uroporphyrinogen-III to yield coproporphyrinogen-III. This is Uroporphyrinogen decarboxylase from Solibacter usitatus (strain Ellin6076).